The chain runs to 239 residues: Orotidine 5'-phosphate decarboxylase (239 aa).

Substrate is bound by residues Asp-15, Lys-37, 64–73 (DLKFHDIPNT), Thr-126, Arg-187, Gln-196, Gly-216, and Arg-217. Lys-66 serves as the catalytic Proton donor.

The protein belongs to the OMP decarboxylase family. Type 1 subfamily. As to quaternary structure, homodimer.

The enzyme catalyses orotidine 5'-phosphate + H(+) = UMP + CO2. It functions in the pathway pyrimidine metabolism; UMP biosynthesis via de novo pathway; UMP from orotate: step 2/2. Functionally, catalyzes the decarboxylation of orotidine 5'-monophosphate (OMP) to uridine 5'-monophosphate (UMP). This is Orotidine 5'-phosphate decarboxylase from Geobacter metallireducens (strain ATCC 53774 / DSM 7210 / GS-15).